Here is a 297-residue protein sequence, read N- to C-terminus: MNSSAASPPAVSPHAAPSRTTVRARAALQVELDGGGTARITELRAAVPVLPRRTGGSGRVVVVHLVGGAGGPLAGDDLGLDIIVGAGAHLVVRSVAATVALPGHGAGPSTFALRAQVGPAAMLSFLPEPTVVARGARHRMTTEIILAADARLRYREEIILGRFGEPGGDLETSLRVDVDQAPGPAPTTDAGTAPAPGPRRRPLLHQELRLGPRVPGVAGPAVLAGARAVGSVLVAGPATGLEPVTAAVGDSVALMPLAGPGVLVCALADDALALRRRLDSLAGVLTGSLADPLPVGS.

Residues 1–18 show a composition bias toward low complexity; the sequence is MNSSAASPPAVSPHAAPS. 2 disordered regions span residues 1–20 and 178–201; these read MNSSAASPPAVSPHAAPSRT and VDQAPGPAPTTDAGTAPAPGPRRR.

This sequence belongs to the UreD family. As to quaternary structure, ureD, UreF and UreG form a complex that acts as a GTP-hydrolysis-dependent molecular chaperone, activating the urease apoprotein by helping to assemble the nickel containing metallocenter of UreC. The UreE protein probably delivers the nickel.

The protein localises to the cytoplasm. Functionally, required for maturation of urease via the functional incorporation of the urease nickel metallocenter. The sequence is that of Urease accessory protein UreD from Parafrankia sp. (strain EAN1pec).